A 720-amino-acid polypeptide reads, in one-letter code: Armadillo repeat-containing protein 8 (720 aa).

ARM repeat units lie at residues 51-92, 95-134, 138-176, 178-217, 224-265, 269-309, 313-352, 421-460, 463-502, 505-544, 548-587, 590-632, 635-674, and 681-720; these read NKQK…SLSM, ENNV…TVFT, TPVE…HCCK, PDHQ…VLAF, MTLA…YMCR, IRTD…YLIE, ELQR…ETGQ, DIRK…SLSR, QQLR…NLLL, SPSK…NMAF, QKIK…NLLS, PHID…NIAD, TAKD…NLTW, and QERQ…QYFA.

In terms of assembly, identified in the CTLH complex that contains at least MAEA, RMND5A (or alternatively its paralog RMND5B), GID8, WDR26, and RANBP9 and/or RANBP10; ARMC8 has an ancillary role in the complex.

The protein localises to the nucleus. Its subcellular location is the cytoplasm. Functionally, component of the CTLH E3 ubiquitin-protein ligase complex that mediates ubiquitination and subsequent proteasomal degradation of target proteins. The polypeptide is Armadillo repeat-containing protein 8 (armc8) (Xenopus laevis (African clawed frog)).